The following is a 431-amino-acid chain: UDP-N-acetylglucosamine 1-carboxyvinyltransferase (431 aa).

22–23 (KN) contacts phosphoenolpyruvate. R102 lines the UDP-N-acetyl-alpha-D-glucosamine pocket. C126 (proton donor) is an active-site residue. At C126 the chain carries 2-(S-cysteinyl)pyruvic acid O-phosphothioketal. 2 residues coordinate UDP-N-acetyl-alpha-D-glucosamine: D318 and I340.

It belongs to the EPSP synthase family. MurA subfamily.

The protein resides in the cytoplasm. It catalyses the reaction phosphoenolpyruvate + UDP-N-acetyl-alpha-D-glucosamine = UDP-N-acetyl-3-O-(1-carboxyvinyl)-alpha-D-glucosamine + phosphate. It functions in the pathway cell wall biogenesis; peptidoglycan biosynthesis. In terms of biological role, cell wall formation. Adds enolpyruvyl to UDP-N-acetylglucosamine. In Bartonella henselae (strain ATCC 49882 / DSM 28221 / CCUG 30454 / Houston 1) (Rochalimaea henselae), this protein is UDP-N-acetylglucosamine 1-carboxyvinyltransferase.